The following is a 98-amino-acid chain: Integration host factor subunit alpha (98 aa).

The protein belongs to the bacterial histone-like protein family. As to quaternary structure, heterodimer of an alpha and a beta chain.

In terms of biological role, this protein is one of the two subunits of integration host factor, a specific DNA-binding protein that functions in genetic recombination as well as in transcriptional and translational control. This is Integration host factor subunit alpha from Idiomarina loihiensis (strain ATCC BAA-735 / DSM 15497 / L2-TR).